The chain runs to 132 residues: Small ribosomal subunit protein uS8 (132 aa).

It belongs to the universal ribosomal protein uS8 family. Part of the 30S ribosomal subunit. Contacts proteins S5 and S12.

One of the primary rRNA binding proteins, it binds directly to 16S rRNA central domain where it helps coordinate assembly of the platform of the 30S subunit. This chain is Small ribosomal subunit protein uS8, found in Rhizobium meliloti (strain 1021) (Ensifer meliloti).